A 251-amino-acid polypeptide reads, in one-letter code: Large ribosomal subunit protein uL3 (251 aa).

The residue at position 151 (Gln151) is an N5-methylglutamine. The interval 219-251 (PGAFRRNGEEAAAAPAAEAPAETPAEEAGQEGA) is disordered. The segment covering 228–241 (EAAAAPAAEAPAET) has biased composition (low complexity). Residues 242-251 (PAEEAGQEGA) are compositionally biased toward acidic residues.

This sequence belongs to the universal ribosomal protein uL3 family. In terms of assembly, part of the 50S ribosomal subunit. Forms a cluster with proteins L14 and L19. In terms of processing, methylated by PrmB.

In terms of biological role, one of the primary rRNA binding proteins, it binds directly near the 3'-end of the 23S rRNA, where it nucleates assembly of the 50S subunit. The polypeptide is Large ribosomal subunit protein uL3 (Parvibaculum lavamentivorans (strain DS-1 / DSM 13023 / NCIMB 13966)).